The chain runs to 354 residues: 3'-5' exonuclease (354 aa).

The segment at 1 to 120 (MERYLTKMPI…PSPEKEKPEK (120 aa)) is disordered. The segment covering 13 to 50 (KANEVPKKEAFAKKETPKVARKATKTDTPKELKDKENA) has biased composition (basic and acidic residues). Over residues 59-70 (TKGRPGRPAAKR) the composition is skewed to basic residues. Residues 71-91 (KNLDTPDVKDEKIAMEEENPP) show a composition bias toward basic and acidic residues. Residues serine 104, serine 110, and serine 112 each carry the phosphoserine modification. In terms of domain architecture, 3'-5' exonuclease spans 149 to 314 (WVEKQKDDVV…GQVIYRELER (166 aa)). 3 residues coordinate Mg(2+): aspartate 163, glutamate 165, and aspartate 301.

Belongs to the WRNexo family.

The protein localises to the nucleus. In terms of biological role, has exonuclease activity on both single-stranded and duplex templates bearing overhangs, but not blunt ended duplex DNA, and cleaves in a 3'-5' direction. Essential for the formation of DNA replication focal centers. Has an important role in maintaining genome stability. The chain is 3'-5' exonuclease from Drosophila sechellia (Fruit fly).